Consider the following 226-residue polypeptide: MRILGLSAALLILGGCASTNEPPVQANDPSFAPVVPDYPRETVVEDGSLFRSQLANNLYSDVTARRVGDIITVTLSENTQASKSADTSTAKDTNVNLNPITGLAGQAINIGGESIQLGVSSSRDFSGDAAANQSNSLIGAISVTVVDVLPNSNLVIRGEKWLTLNQGDEYIRLTGIIRPADISPENEIVSTKVANARIQYSGTGSFARAQEKGWLTKFFDSTWWPL.

The signal sequence occupies residues methionine 1–glycine 15. Cysteine 16 carries N-palmitoyl cysteine lipidation. Cysteine 16 is lipidated: S-diacylglycerol cysteine.

Belongs to the FlgH family. The basal body constitutes a major portion of the flagellar organelle and consists of four rings (L,P,S, and M) mounted on a central rod.

It is found in the cell outer membrane. The protein localises to the bacterial flagellum basal body. Functionally, assembles around the rod to form the L-ring and probably protects the motor/basal body from shearing forces during rotation. This Alteromonas mediterranea (strain DSM 17117 / CIP 110805 / LMG 28347 / Deep ecotype) protein is Flagellar L-ring protein.